The chain runs to 151 residues: NADPH-dependent 7-cyano-7-deazaguanine reductase (151 aa).

Cysteine 51 serves as the catalytic Thioimide intermediate. Catalysis depends on aspartate 58, which acts as the Proton donor. Residues 73 to 75 and 92 to 93 each bind substrate; these read VES and HE.

It belongs to the GTP cyclohydrolase I family. QueF type 1 subfamily.

It is found in the cytoplasm. The enzyme catalyses 7-aminomethyl-7-carbaguanine + 2 NADP(+) = 7-cyano-7-deazaguanine + 2 NADPH + 3 H(+). The protein operates within tRNA modification; tRNA-queuosine biosynthesis. Catalyzes the NADPH-dependent reduction of 7-cyano-7-deazaguanine (preQ0) to 7-aminomethyl-7-deazaguanine (preQ1). This is NADPH-dependent 7-cyano-7-deazaguanine reductase from Bacteroides thetaiotaomicron (strain ATCC 29148 / DSM 2079 / JCM 5827 / CCUG 10774 / NCTC 10582 / VPI-5482 / E50).